The primary structure comprises 214 residues: Adenylate kinase (214 aa).

10 to 15 (GAGKGT) provides a ligand contact to ATP. The NMP stretch occupies residues 30–59 (ATGDVLRAAVKEGTPLGLEAKAAMDRGDLV). Residues Thr31, Arg36, 57–59 (DLV), and Gln92 each bind AMP. The segment at 126–161 (GRTTCEACQRPFFGRQPGETCTEGGVSGTLVRRKDD) is LID. Arg127 contributes to the ATP binding site. The AMP site is built by Arg158 and Arg169. Gly198 contacts ATP.

It belongs to the adenylate kinase family. Monomer.

It localises to the cytoplasm. It carries out the reaction AMP + ATP = 2 ADP. It functions in the pathway purine metabolism; AMP biosynthesis via salvage pathway; AMP from ADP: step 1/1. Its function is as follows. Catalyzes the reversible transfer of the terminal phosphate group between ATP and AMP. Plays an important role in cellular energy homeostasis and in adenine nucleotide metabolism. In Gemmatimonas aurantiaca (strain DSM 14586 / JCM 11422 / NBRC 100505 / T-27), this protein is Adenylate kinase.